Consider the following 298-residue polypeptide: 4-hydroxy-tetrahydrodipicolinate synthase (298 aa).

Threonine 48 serves as a coordination point for pyruvate. Tyrosine 137 (proton donor/acceptor) is an active-site residue. Lysine 166 functions as the Schiff-base intermediate with substrate in the catalytic mechanism. Isoleucine 207 provides a ligand contact to pyruvate.

Belongs to the DapA family. In terms of assembly, homotetramer; dimer of dimers.

It is found in the cytoplasm. The enzyme catalyses L-aspartate 4-semialdehyde + pyruvate = (2S,4S)-4-hydroxy-2,3,4,5-tetrahydrodipicolinate + H2O + H(+). It functions in the pathway amino-acid biosynthesis; L-lysine biosynthesis via DAP pathway; (S)-tetrahydrodipicolinate from L-aspartate: step 3/4. In terms of biological role, catalyzes the condensation of (S)-aspartate-beta-semialdehyde [(S)-ASA] and pyruvate to 4-hydroxy-tetrahydrodipicolinate (HTPA). In Campylobacter hominis (strain ATCC BAA-381 / DSM 21671 / CCUG 45161 / LMG 19568 / NCTC 13146 / CH001A), this protein is 4-hydroxy-tetrahydrodipicolinate synthase.